The primary structure comprises 179 residues: Ribosome maturation factor RimM (179 aa).

The region spanning 96–175 (KDEYFWFDIE…IITVIGAMDI (80 aa)) is the PRC barrel domain.

Belongs to the RimM family. In terms of assembly, binds ribosomal protein uS19.

The protein resides in the cytoplasm. Its function is as follows. An accessory protein needed during the final step in the assembly of 30S ribosomal subunit, possibly for assembly of the head region. Essential for efficient processing of 16S rRNA. May be needed both before and after RbfA during the maturation of 16S rRNA. It has affinity for free ribosomal 30S subunits but not for 70S ribosomes. This Sulfurimonas denitrificans (strain ATCC 33889 / DSM 1251) (Thiomicrospira denitrificans (strain ATCC 33889 / DSM 1251)) protein is Ribosome maturation factor RimM.